The chain runs to 195 residues: Imidazoleglycerol-phosphate dehydratase (195 aa).

Belongs to the imidazoleglycerol-phosphate dehydratase family.

The protein localises to the cytoplasm. It catalyses the reaction D-erythro-1-(imidazol-4-yl)glycerol 3-phosphate = 3-(imidazol-4-yl)-2-oxopropyl phosphate + H2O. It participates in amino-acid biosynthesis; L-histidine biosynthesis; L-histidine from 5-phospho-alpha-D-ribose 1-diphosphate: step 6/9. The chain is Imidazoleglycerol-phosphate dehydratase from Nitrosomonas eutropha (strain DSM 101675 / C91 / Nm57).